Reading from the N-terminus, the 699-residue chain is NAD(P)H-quinone oxidoreductase subunit 5, chloroplastic (699 aa).

The next 15 helical transmembrane spans lie at 1-21, 32-52, 81-101, 117-137, 139-159, 177-197, 216-236, 250-270, 272-292, 319-339, 346-366, 388-408, 417-437, 539-559, and 598-618; these read WIIP…LLLF, WAFP…NLSI, IDPL…TVLI, FAYM…SNLI, IYIF…FWFT, GDFG…SFEF, LFVT…SAQF, TPIS…FLVA, LLPL…IGII, LGYM…FHLI, ALLF…VGYS, ISFL…CFWS, WLYS…TAFY, LFPL…GISF, and IFSV…YKPI.

The protein belongs to the complex I subunit 5 family. In terms of assembly, NDH is composed of at least 16 different subunits, 5 of which are encoded in the nucleus.

The protein localises to the plastid. Its subcellular location is the chloroplast thylakoid membrane. The catalysed reaction is a plastoquinone + NADH + (n+1) H(+)(in) = a plastoquinol + NAD(+) + n H(+)(out). It carries out the reaction a plastoquinone + NADPH + (n+1) H(+)(in) = a plastoquinol + NADP(+) + n H(+)(out). Functionally, NDH shuttles electrons from NAD(P)H:plastoquinone, via FMN and iron-sulfur (Fe-S) centers, to quinones in the photosynthetic chain and possibly in a chloroplast respiratory chain. The immediate electron acceptor for the enzyme in this species is believed to be plastoquinone. Couples the redox reaction to proton translocation, and thus conserves the redox energy in a proton gradient. In Digitalis grandiflora (Yellow foxglove), this protein is NAD(P)H-quinone oxidoreductase subunit 5, chloroplastic (ndhF).